Reading from the N-terminus, the 130-residue chain is Ribonuclease P protein component (130 aa).

Belongs to the RnpA family. As to quaternary structure, consists of a catalytic RNA component (M1 or rnpB) and a protein subunit.

The enzyme catalyses Endonucleolytic cleavage of RNA, removing 5'-extranucleotides from tRNA precursor.. Functionally, RNaseP catalyzes the removal of the 5'-leader sequence from pre-tRNA to produce the mature 5'-terminus. It can also cleave other RNA substrates such as 4.5S RNA. The protein component plays an auxiliary but essential role in vivo by binding to the 5'-leader sequence and broadening the substrate specificity of the ribozyme. In Desulfovibrio desulfuricans (strain ATCC 27774 / DSM 6949 / MB), this protein is Ribonuclease P protein component.